Reading from the N-terminus, the 383-residue chain is Xylose/arabinose import ATP-binding protein XacK (383 aa).

In terms of domain architecture, ABC transporter spans 4–240 (LTLDDVTKVY…PNNLFVAGFI (237 aa)). 41-48 (GPSGCGKS) lines the ATP pocket.

This sequence belongs to the ABC transporter superfamily. Carbohydrate uptake transporter-1 (CUT1) (TC 3.A.1.1) family. In terms of assembly, the complex is composed of two ATP-binding proteins (XacJ and XacK), two transmembrane proteins (XacH and XacI) and a solute-binding protein (XacG).

The protein localises to the cell membrane. The enzyme catalyses D-xylose(out) + ATP + H2O = D-xylose(in) + ADP + phosphate + H(+). It carries out the reaction L-arabinose(out) + ATP + H2O = L-arabinose(in) + ADP + phosphate + H(+). In terms of biological role, part of the ABC transporter complex XacGHIJK involved in the uptake of xylose and arabinose. Responsible for energy coupling to the transport system. The chain is Xylose/arabinose import ATP-binding protein XacK from Haloferax volcanii (strain ATCC 29605 / DSM 3757 / JCM 8879 / NBRC 14742 / NCIMB 2012 / VKM B-1768 / DS2) (Halobacterium volcanii).